Here is a 221-residue protein sequence, read N- to C-terminus: Enolase-phosphatase E1 (221 aa).

Belongs to the HAD-like hydrolase superfamily. MasA/MtnC family. Monomer. It depends on Mg(2+) as a cofactor.

It catalyses the reaction 5-methylsulfanyl-2,3-dioxopentyl phosphate + H2O = 1,2-dihydroxy-5-(methylsulfanyl)pent-1-en-3-one + phosphate. Its pathway is amino-acid biosynthesis; L-methionine biosynthesis via salvage pathway; L-methionine from S-methyl-5-thio-alpha-D-ribose 1-phosphate: step 3/6. It participates in amino-acid biosynthesis; L-methionine biosynthesis via salvage pathway; L-methionine from S-methyl-5-thio-alpha-D-ribose 1-phosphate: step 4/6. Bifunctional enzyme that catalyzes the enolization of 2,3-diketo-5-methylthiopentyl-1-phosphate (DK-MTP-1-P) into the intermediate 2-hydroxy-3-keto-5-methylthiopentenyl-1-phosphate (HK-MTPenyl-1-P), which is then dephosphorylated to form the acireductone 1,2-dihydroxy-3-keto-5-methylthiopentene (DHK-MTPene). The sequence is that of Enolase-phosphatase E1 from Hydrogenobaculum sp. (strain Y04AAS1).